Reading from the N-terminus, the 42-residue chain is Iota-conotoxin-like R11.15 (42 aa).

4 cysteine pairs are disulfide-bonded: cysteine 5–cysteine 19, cysteine 12–cysteine 22, cysteine 18–cysteine 27, and cysteine 21–cysteine 36.

The protein belongs to the conotoxin I1 superfamily. In terms of tissue distribution, expressed by the venom duct.

It localises to the secreted. In terms of biological role, iota-conotoxins bind to voltage-gated sodium channels (Nav) and act as agonists by shifting the voltage-dependence of activation to more hyperpolarized levels. Produces general excitatory symptoms. This Conus radiatus (Rayed cone) protein is Iota-conotoxin-like R11.15.